A 267-amino-acid chain; its full sequence is Protein PERCC1 (267 aa).

Disordered stretches follow at residues 19–88 (HHPF…QLLR), 142–163 (SLEDEDTPEPRVPQGQVCRPGL), and 247–267 (ACPELPGRGTPALEGARPAEA). Positions 28–50 (EPPETSEEEEEEEEEEEEEEGEG) are enriched in acidic residues. The segment covering 74–83 (PEGPGSPETP) has biased composition (low complexity).

Functionally, plays a critical role in intestinal function. Acts by promoting the development of enteroendocrine cells (EECs) of the gastrointestinal tract and pancreas. It is thereby required for normal enteroendocrine peptide hormone secretion. This Homo sapiens (Human) protein is Protein PERCC1.